Reading from the N-terminus, the 257-residue chain is Imidazole glycerol phosphate synthase subunit HisF (257 aa).

Catalysis depends on residues Asp11 and Asp130.

Belongs to the HisA/HisF family. In terms of assembly, heterodimer of HisH and HisF.

The protein localises to the cytoplasm. It carries out the reaction 5-[(5-phospho-1-deoxy-D-ribulos-1-ylimino)methylamino]-1-(5-phospho-beta-D-ribosyl)imidazole-4-carboxamide + L-glutamine = D-erythro-1-(imidazol-4-yl)glycerol 3-phosphate + 5-amino-1-(5-phospho-beta-D-ribosyl)imidazole-4-carboxamide + L-glutamate + H(+). The protein operates within amino-acid biosynthesis; L-histidine biosynthesis; L-histidine from 5-phospho-alpha-D-ribose 1-diphosphate: step 5/9. In terms of biological role, IGPS catalyzes the conversion of PRFAR and glutamine to IGP, AICAR and glutamate. The HisF subunit catalyzes the cyclization activity that produces IGP and AICAR from PRFAR using the ammonia provided by the HisH subunit. This Shewanella denitrificans (strain OS217 / ATCC BAA-1090 / DSM 15013) protein is Imidazole glycerol phosphate synthase subunit HisF.